The following is a 78-amino-acid chain: MKSATLLALSYLLIALYFLICEAEHSRYEEHEILEENMGDVVNLEQRSCAKPGEMCMRIKCCDGQCGCNRGTGRCFCK.

The first 23 residues, 1 to 23 (MKSATLLALSYLLIALYFLICEA), serve as a signal peptide directing secretion. A propeptide spanning residues 24–47 (EHSRYEEHEILEENMGDVVNLEQR) is cleaved from the precursor. Intrachain disulfides connect Cys49–Cys62, Cys56–Cys66, and Cys61–Cys77.

The protein belongs to the hainantoxin family. 20 subfamily. As to expression, expressed by the venom gland.

The protein resides in the secreted. Moderately inhibits Kv1.1/KCNA1 and Kv1.2/KCNA2 and weakly inhibits Kv1.3/KCNA3, and Kv2.1/KCNB1 voltage-gated potassium channels. This chain is Hainantoxin-XX.2, found in Cyriopagopus hainanus (Chinese bird spider).